We begin with the raw amino-acid sequence, 184 residues long: Peptide deformylase (184 aa).

Positions 111 and 154 each coordinate Fe cation. The active site involves Glu-155. His-158 provides a ligand contact to Fe cation.

It belongs to the polypeptide deformylase family. Fe(2+) is required as a cofactor.

It carries out the reaction N-terminal N-formyl-L-methionyl-[peptide] + H2O = N-terminal L-methionyl-[peptide] + formate. In terms of biological role, removes the formyl group from the N-terminal Met of newly synthesized proteins. Requires at least a dipeptide for an efficient rate of reaction. N-terminal L-methionine is a prerequisite for activity but the enzyme has broad specificity at other positions. This chain is Peptide deformylase, found in Lacticaseibacillus casei (strain BL23) (Lactobacillus casei).